Here is a 541-residue protein sequence, read N- to C-terminus: Phenazine N-monooxygenase PhzNO1 (541 aa).

Residues Asp-39, 47 to 50, 59 to 60, Tyr-65, and Ile-112 each bind FAD; these read TWYW and DT. 57-59 lines the NADP(+) pocket; that stretch reads RAD. NADP(+) contacts are provided by residues 186-192, 209-210, and Trp-492; these read TGSTGVQ and RS.

The protein belongs to the FAD-binding monooxygenase family. FAD serves as cofactor.

The enzyme catalyses 1,6-dihydroxyphenazine + NADPH + O2 = 1,6-dihydroxyphenazine N(5)-oxide + NADP(+) + H2O. It carries out the reaction 1,6-dihydroxyphenazine N(5)-oxide + NADPH + O2 = 1,6-dihydroxyphenazine N(5),N(10)-dioxide + NADP(+) + H2O. It catalyses the reaction 1-hydroxy-6-methoxyphenazine + NADPH + O2 = 1-hydroxy-6-methoxyphenazine N(10)-oxide + NADP(+) + H2O. The catalysed reaction is quinolin-8-ol + NADPH + O2 = 8-hydroxyquinoline N-oxide + NADP(+) + H2O. Its function is as follows. Involved in the biosynthesis of phenazine natural products including myxin, an N(5),N(10)-dioxide phenazine antiobiotic, which has antimicrobial activity. Catalyzes the aromatic N-oxidations of phenazines, such as 1,6-dihydroxyphenazine (DHP), 1,6-dihydroxyphenazine N(5)-oxide (DHPO) and 1-hydroxy-6-methoxyphenazine to produce DHPO, iodinin (1,6-dihydroxyphenazine N(5),N(10)-dioxide) and 1-hydroxy-6-methoxyphenazine N(10)-oxide, respectively. Also catalyzes the N-oxidation of 8-hydroxyquinoline, but not 6-hydroxyquinoline (6-HQ), quinoline, quinoxaline, quinine and 2-phenylpyridine. This Lysobacter antibioticus protein is Phenazine N-monooxygenase PhzNO1.